The following is a 394-amino-acid chain: Phosphopentomutase (394 aa).

Residues Asp13, Asp286, His291, Asp327, His328, and His339 each coordinate Mn(2+).

This sequence belongs to the phosphopentomutase family. The cofactor is Mn(2+).

The protein localises to the cytoplasm. It carries out the reaction 2-deoxy-alpha-D-ribose 1-phosphate = 2-deoxy-D-ribose 5-phosphate. It catalyses the reaction alpha-D-ribose 1-phosphate = D-ribose 5-phosphate. Its pathway is carbohydrate degradation; 2-deoxy-D-ribose 1-phosphate degradation; D-glyceraldehyde 3-phosphate and acetaldehyde from 2-deoxy-alpha-D-ribose 1-phosphate: step 1/2. In terms of biological role, isomerase that catalyzes the conversion of deoxy-ribose 1-phosphate (dRib-1-P) and ribose 1-phosphate (Rib-1-P) to deoxy-ribose 5-phosphate (dRib-5-P) and ribose 5-phosphate (Rib-5-P), respectively. This is Phosphopentomutase from Bacillus anthracis (strain A0248).